Here is a 595-residue protein sequence, read N- to C-terminus: 73 kDa paraflagellar rod protein (595 aa).

Residues 294–317 (DAEATKRHAANKEKSDRYIRENED) are disordered. Residues 317–337 (DRQEETWNKIQDLERQLQKLG) form a calmodulin-binding region.

As to quaternary structure, heterodimer of a 69 kDa and a 73 kDa protein.

It is found in the cell projection. It localises to the cilium. The protein localises to the flagellum. The protein resides in the cytoplasm. Its subcellular location is the cytoskeleton. Its function is as follows. Major component of the paraflagellar rod (PFR). The PFR is a highly ordered lattices of fibrous proteins that are located inside the flagellum and assume a fixed orientation with respect to the microtubular axoneme. This Trypanosoma brucei brucei protein is 73 kDa paraflagellar rod protein (PFRC).